A 729-amino-acid polypeptide reads, in one-letter code: Zorya protein ZorA (729 aa).

The next 3 membrane-spanning stretches (helical) occupy residues 20-40, 135-155, and 177-197; these read PATVIGLVSFAFLCFIFFYFF, LPGILTGVGIIGTFYGLMIGL, and VLYAFLGSAFAITFSILITWL.

This sequence belongs to the MotA family.

It localises to the cell inner membrane. Component of antiviral defense system Zorya type I, composed of ZorA, ZorB, ZorC and ZorD. Expression of Zorya type I in E.coli (strain MG1655) confers 10,000-fold resistance to phage SECphi27, 100-fold resistance to lambda, and 10-fold resistance to T7. While most T7 infected Zorya-containing cells undergo abortive infection, a minority produce viable phage progeny. These eventually accumulate to a high multiplicity of infection, leading to culture collapse by 2 hours after initial infection. ZorA and ZorB probably assemble in the cell inner membrane and exert their effect there. The polypeptide is Zorya protein ZorA (Escherichia coli O139:H28 (strain E24377A / ETEC)).